The sequence spans 1427 residues: DNA-directed RNA polymerase subunit beta' (1427 aa).

Zn(2+)-binding residues include Cys-70, Cys-72, Cys-85, and Cys-88. Positions 461, 463, and 465 each coordinate Mg(2+). Positions 810, 884, 891, and 894 each coordinate Zn(2+). Disordered stretches follow at residues 1044–1065 and 1394–1427; these read QTDEATGMSSRVVTENRAAGRG and PEAAIGDDPLATVEGETHGTDADAGDYLIEGDEA.

The protein belongs to the RNA polymerase beta' chain family. In terms of assembly, the RNAP catalytic core consists of 2 alpha, 1 beta, 1 beta' and 1 omega subunit. When a sigma factor is associated with the core the holoenzyme is formed, which can initiate transcription. It depends on Mg(2+) as a cofactor. Zn(2+) is required as a cofactor.

The catalysed reaction is RNA(n) + a ribonucleoside 5'-triphosphate = RNA(n+1) + diphosphate. In terms of biological role, DNA-dependent RNA polymerase catalyzes the transcription of DNA into RNA using the four ribonucleoside triphosphates as substrates. This Novosphingobium aromaticivorans (strain ATCC 700278 / DSM 12444 / CCUG 56034 / CIP 105152 / NBRC 16084 / F199) protein is DNA-directed RNA polymerase subunit beta'.